We begin with the raw amino-acid sequence, 192 residues long: UPF0312 protein PFLU_5725 (192 aa).

The signal sequence occupies residues 1-23 (MLKKTLAALAIGTALLSAGQVMA).

The protein belongs to the UPF0312 family. Type 1 subfamily.

It is found in the periplasm. This Pseudomonas fluorescens (strain SBW25) protein is UPF0312 protein PFLU_5725.